Consider the following 204-residue polypeptide: Small ribosomal subunit protein uS4 (204 aa).

The region spanning 93-156 (SRLSSVLYHS…AKIPVVVEAE (64 aa)) is the S4 RNA-binding domain.

Belongs to the universal ribosomal protein uS4 family. As to quaternary structure, part of the 30S ribosomal subunit. Contacts protein S5. The interaction surface between S4 and S5 is involved in control of translational fidelity.

Its function is as follows. One of the primary rRNA binding proteins, it binds directly to 16S rRNA where it nucleates assembly of the body of the 30S subunit. With S5 and S12 plays an important role in translational accuracy. This is Small ribosomal subunit protein uS4 from Wolbachia pipientis wMel.